The following is a 327-amino-acid chain: NF-kappa-B inhibitor delta (327 aa).

The segment at 1 to 40 is disordered; the sequence is MEDSLDTRLYPEPSLSQVGSWRVSSLPSGSPQLPSPTGPS. Residues 14 to 23 are compositionally biased toward polar residues; it reads SLSQVGSWRV. 6 ANK repeats span residues 62–97, 98–127, 131–160, 166–215, 220–250, and 257–290; these read EGDTLLHLFAARGLRWAAYAAAEVLQMYRQLDIREH, KGKTPLLVAAAANQPLIVEDLLSLGAEPNA, QGRSVLHVAATYGLPGVLSAVFKSGIQVDL, EGLT…SHTS, SNKTILHLAVQAANPTLVQLLLGLPRGDLRA, and HGNTALHMAAALPPGPPQEAIVRHLLAAGADPTL. The segment at 293-327 is disordered; sequence LENEQPVHLLRPGPGPEGLRQLLKRSRTAPPGLSS.

Belongs to the NF-kappa-B inhibitor family. In terms of assembly, interacts with NFKB1, RELA and RELB; in the nucleus. Specifically expressed in spleen and at low levels in thymus. Expressed in a population of antigen-presenting dendritic cells which may act as regulators of systemic inflammatory response.

Its subcellular location is the nucleus. Functionally, regulates the expression of IL-2, IL-6, and other cytokines through regulation on NF-kappa-B activity. Functions in the regulation of inflammatory responses. Involved in the induction of T helper 17 cells (Th17) differentiation upon recognition of antigen by T cell antigen receptor (TCR). According to PubMed:11931770, it may also regulate TCR-induced negative selection of thymocytes. This chain is NF-kappa-B inhibitor delta (Nfkbid), found in Mus musculus (Mouse).